The sequence spans 367 residues: Cytochrome b (367 aa).

4 helical membrane passes run 33-53 (FGSL…FLAM), 77-98 (WVLR…YLHI), 113-133 (WNMG…GYVL), and 178-198 (FFAF…VHLL). Positions 83 and 97 each coordinate heme b. His182 and His196 together coordinate heme b. His201 contributes to the a ubiquinone binding site. The next 4 helical transmembrane spans lie at 226–246 (IKDI…VLFS), 288–308 (LGGV…PFLH), 320–340 (FSQC…WIGG), and 347–367 (YIII…VIMP).

Belongs to the cytochrome b family. In terms of assembly, the cytochrome bc1 complex contains 11 subunits: 3 respiratory subunits (MT-CYB, CYC1 and UQCRFS1), 2 core proteins (UQCRC1 and UQCRC2) and 6 low-molecular weight proteins (UQCRH/QCR6, UQCRB/QCR7, UQCRQ/QCR8, UQCR10/QCR9, UQCR11/QCR10 and a cleavage product of UQCRFS1). This cytochrome bc1 complex then forms a dimer. Heme b serves as cofactor.

The protein localises to the mitochondrion inner membrane. In terms of biological role, component of the ubiquinol-cytochrome c reductase complex (complex III or cytochrome b-c1 complex) that is part of the mitochondrial respiratory chain. The b-c1 complex mediates electron transfer from ubiquinol to cytochrome c. Contributes to the generation of a proton gradient across the mitochondrial membrane that is then used for ATP synthesis. The sequence is that of Cytochrome b (MT-CYB) from Hypsugo savii (Savi's pipistrelle).